Consider the following 161-residue polypeptide: Transcription elongation factor GreB (161 aa).

It belongs to the GreA/GreB family. GreB subfamily.

Its function is as follows. Necessary for efficient RNA polymerase transcription elongation past template-encoded arresting sites. The arresting sites in DNA have the property of trapping a certain fraction of elongating RNA polymerases that pass through, resulting in locked ternary complexes. Cleavage of the nascent transcript by cleavage factors such as GreA or GreB allows the resumption of elongation from the new 3'terminus. GreB releases sequences of up to 9 nucleotides in length. This Vibrio cholerae serotype O1 (strain ATCC 39315 / El Tor Inaba N16961) protein is Transcription elongation factor GreB.